The chain runs to 137 residues: 2-iminobutanoate/2-iminopropanoate deaminase (137 aa).

S2 is modified (N-acetylserine). An N6-succinyllysine mark is found at K13 and K67. T74 bears the Phosphothreonine mark. S136 is subject to Phosphoserine.

The protein belongs to the RutC family. Homotrimer. Interacts with YTHDF2.

The protein resides in the cytoplasm. Its subcellular location is the nucleus. The protein localises to the peroxisome. It is found in the mitochondrion. It catalyses the reaction 2-iminobutanoate + H2O = 2-oxobutanoate + NH4(+). It carries out the reaction 2-iminopropanoate + H2O = pyruvate + NH4(+). Catalyzes the hydrolytic deamination of enamine/imine intermediates that form during the course of normal metabolism. May facilitate the release of ammonia from these potentially toxic reactive metabolites, reducing their impact on cellular components. It may act on enamine/imine intermediates formed by several types of pyridoxal-5'-phosphate-dependent dehydratases including L-threonine dehydratase. Its function is as follows. Also promotes endoribonucleolytic cleavage of some transcripts by promoting recruitment of the ribonuclease P/MRP complex. Acts by bridging YTHDF2 and the ribonuclease P/MRP complex. RIDA/HRSP12 binds to N6-methyladenosine (m6A)-containing mRNAs containing a 5'-GGUUC-3' motif: cooperative binding of RIDA/HRSP12 and YTHDF2 to such transcripts lead to recruitment of the ribonuclease P/MRP complex and subsequent endoribonucleolytic cleavage. The polypeptide is 2-iminobutanoate/2-iminopropanoate deaminase (Bos taurus (Bovine)).